The primary structure comprises 87 residues: Small ribosomal subunit protein bS18 (87 aa).

The protein belongs to the bacterial ribosomal protein bS18 family. In terms of assembly, part of the 30S ribosomal subunit. Forms a tight heterodimer with protein bS6.

In terms of biological role, binds as a heterodimer with protein bS6 to the central domain of the 16S rRNA, where it helps stabilize the platform of the 30S subunit. This chain is Small ribosomal subunit protein bS18, found in Sulfurovum sp. (strain NBC37-1).